Here is a 293-residue protein sequence, read N- to C-terminus: Nucleotide-binding protein BC_5156 (293 aa).

14–21 (GMSGAGKT) contributes to the ATP binding site. 65 to 68 (DLRG) contributes to the GTP binding site.

The protein belongs to the RapZ-like family.

Its function is as follows. Displays ATPase and GTPase activities. The sequence is that of Nucleotide-binding protein BC_5156 from Bacillus cereus (strain ATCC 14579 / DSM 31 / CCUG 7414 / JCM 2152 / NBRC 15305 / NCIMB 9373 / NCTC 2599 / NRRL B-3711).